The chain runs to 427 residues: Trigger factor (427 aa).

The region spanning 163 to 248 is the PPIase FKBP-type domain; sequence GDTVVIDFVG…IHEVKAKEVP (86 aa).

It belongs to the FKBP-type PPIase family. Tig subfamily.

Its subcellular location is the cytoplasm. It catalyses the reaction [protein]-peptidylproline (omega=180) = [protein]-peptidylproline (omega=0). In terms of biological role, involved in protein export. Acts as a chaperone by maintaining the newly synthesized protein in an open conformation. Functions as a peptidyl-prolyl cis-trans isomerase. The chain is Trigger factor from Streptococcus suis (strain 98HAH33).